The following is an 856-amino-acid chain: MVGRLFRAHGQFCASHPWEVIVATLTLTVCMLTVDQRPLGLPPGWGHNCITLEEYNAADMIVMTLIRCVAVLYSYYQFCHLQKLGSKYILGIAGLFTVFSSFVFSSSVINFLGSDVSDLKDALFFFLLLIDLSKATVLAQFALSSRSQDEVKHNIARGIAMLGPTITLDTVVETLVIGVGMLSGVRRLEVLCCFACMSVIVNYVVFMTFYPACLSLILELSRSGESGRPAWHDKSLIIKALHEEDQKPNPVVQRVKVIMSAGLMLVHAHRWVRCLSIALWPDLTSLRYFCTHCDTGVSYSRWSFASEGEELPTVKLVTGDSVVNSNSTDDAQLHYYIMRWLTVSADHIVILILLLALAVKFVFFETRDELTTTRGMDGWVEVSSPVEHKYVQTEQPSCSAPEQPLEEPPASNRSIDECLSVCKSDVGAQALSDCEVMALVTSGHIAGYQLEKVVRNPERGVGIRRQILTKTADLKDALDNLPYKNYDYLKVMGACCENVIGYMPVPVGVAGPLNLDGRLVHVPLATTEGCLVASTNRGMRALMRCGVTSRIVADGMTRGPVVRFPNIDRASEAMLWMQVPYNFEQIKKNFDSTSRFARLSKIHIRVAGRHLFIRFIATTGDAMGMNMLSKGTEVALAYVQQVYPDMEILSLSGNFCTDKKPAAVNWIEGRGKSVVCEAIVPADIIKSVLKTSVQALMDVNITKNLIGSAVAGSIGGFNAHAANIVTAIFIATGQDPAQNVGSSNCMTLMEPWGEDGKDLYVSCTMPSIEIGTIGGGTVLPPQAACLDMLGVRGANEMCPGENANTLARIVCGTVLAGELSLMSALAAGHLVKSHMRHNRSSVSTSGSEPSTPACKS.

4 helical membrane passes run Phe12 to Leu32, Ile89 to Ile109, Leu123 to Leu143, and Val190 to Tyr210. A glycan (N-linked (GlcNAc...) asparagine) is linked at Asn326. A helical membrane pass occupies residues Ser344–Phe364. Residues Glu365–Gly443 form a linker region. Asn412 is a glycosylation site (N-linked (GlcNAc...) asparagine). The catalytic stretch occupies residues Gly443–Gly771. Catalysis depends on charge relay system residues Glu528 and Lys659. Asn700 carries an N-linked (GlcNAc...) asparagine glycan. The Charge relay system role is filled by Asp735. His834 (proton donor) is an active-site residue. Residues Arg836 to Ser856 are disordered. N-linked (GlcNAc...) asparagine glycosylation occurs at Asn838. Residues Ser840–Ser856 are compositionally biased toward low complexity.

This sequence belongs to the HMG-CoA reductase family.

It localises to the endoplasmic reticulum membrane. It carries out the reaction (R)-mevalonate + 2 NADP(+) + CoA = (3S)-3-hydroxy-3-methylglutaryl-CoA + 2 NADPH + 2 H(+). It participates in metabolic intermediate biosynthesis; (R)-mevalonate biosynthesis; (R)-mevalonate from acetyl-CoA: step 3/3. Its activity is regulated as follows. The activity of HMG-CoA-reductase is suppressed by exogenous mevalonate. Its function is as follows. Synthesis of mevalonate for the production of non-sterol isoprenoids, which are essential for growth differentiation. This is 3-hydroxy-3-methylglutaryl-coenzyme A reductase from Blattella germanica (German cockroach).